The chain runs to 1133 residues: Early transcription factor large subunit homolog (1133 aa).

The region spanning 52-352 (KGGRAFFPCD…PNGQPLQRQQ (301 aa)) is the Helicase ATP-binding domain. 99–106 (WQTGTGKS) provides a ligand contact to ATP. The DEAH box motif lies at 281–284 (DEIH). The Helicase C-terminal domain maps to 524 to 724 (MMKDILSIIR…EGDKALRKHA (201 aa)).

Belongs to the DEAD box helicase family. DEAH subfamily.

Its subcellular location is the virion. It carries out the reaction ATP + H2O = ADP + phosphate + H(+). In terms of biological role, putative initation factor. The sequence is that of Early transcription factor large subunit homolog from Ornithodoros (relapsing fever ticks).